A 229-amino-acid chain; its full sequence is Potassium/proton antiporter CemA (229 aa).

3 helical membrane-spanning segments follow: residues 6–26, 107–127, and 189–209; these read AFIPFFYFTSIVFLPWLISLC, ILHFSTNLISFVILSGYSFWG, and ILSGLVSTFPVILDTIFKYWI.

This sequence belongs to the CemA family.

It localises to the plastid. The protein resides in the chloroplast inner membrane. The catalysed reaction is K(+)(in) + H(+)(out) = K(+)(out) + H(+)(in). Contributes to K(+)/H(+) antiport activity by supporting proton efflux to control proton extrusion and homeostasis in chloroplasts in a light-dependent manner to modulate photosynthesis. Prevents excessive induction of non-photochemical quenching (NPQ) under continuous-light conditions. Indirectly promotes efficient inorganic carbon uptake into chloroplasts. The polypeptide is Potassium/proton antiporter CemA (Arabis hirsuta (Hairy rock-cress)).